Here is a 559-residue protein sequence, read N- to C-terminus: Aspartokinase 3, chloroplastic (559 aa).

The transit peptide at 1–85 (MAASMQFYGV…LNKTEKKLTC (85 aa)) directs the protein to the chloroplast. ATP-binding residues include Lys-88, Gly-91, and Ser-120. Glu-204 contributes to the substrate binding site. ACT domains are found at residues 402 to 480 (ITST…SIIS) and 481 to 559 (LIGN…AASS).

Belongs to the aspartokinase family. In terms of tissue distribution, highly expressed in xylem of leaves and hypocotyls, stele of roots and in trichomes after bolting. Weak expression in veins and mesophyll cells of caulone leaves, inflorescence stems, sepals, petals and stigmata.

The protein localises to the plastid. It localises to the chloroplast. It catalyses the reaction L-aspartate + ATP = 4-phospho-L-aspartate + ADP. It functions in the pathway amino-acid biosynthesis; L-lysine biosynthesis via DAP pathway; (S)-tetrahydrodipicolinate from L-aspartate: step 1/4. The protein operates within amino-acid biosynthesis; L-methionine biosynthesis via de novo pathway; L-homoserine from L-aspartate: step 1/3. Its pathway is amino-acid biosynthesis; L-threonine biosynthesis; L-threonine from L-aspartate: step 1/5. Its activity is regulated as follows. Allosterically inhibited by lysine, but not by S-adenosyl-L-methionine (SAM). K(0.5) for lysine in the presence of physiological concentrations of substrates is 7.4 uM. No inhibition by threonine or leucine and no activation or inhibition by alanine, cysteine, isoleucine, serine, valine, methionine, glutamine, asparagine, glutamic acid or arginine. In terms of biological role, involved in the first step of essential amino acids lysine, threonine, methionine and isoleucine synthesis via the aspartate-family pathway. The polypeptide is Aspartokinase 3, chloroplastic (AK3) (Arabidopsis thaliana (Mouse-ear cress)).